Here is a 1071-residue protein sequence, read N- to C-terminus: MPVLPELAQIQFKGFSRFVHQKLLKELENFPKIEDTDKEVEFRSIGNQYQLTEPSLEERDAAYQCITYSADLYVPAQLICKEDQIVQEEDVRLGSIPWMNSGGTFIINGIARVLVSQILRSPGIYYNRESDQRGILAYTSTVISDQGGRFKLEIDGRNRIWVRISKKKKISIFILLVAMGLCKRDILQNSRYPRIFSNMFKRQKESIESPEDAIVELYKHLYSATDADVFFSESIFRELQKRFFQHRCELGRIGRRNLNIKLTLDVPETESFLLPQDILAAADHLVEISYGEGKLDDIDHLKNRRVRSVADLLQEQLKLALNRLENLIRQNLSRAVRRKRAITPRGLVTPVPVIAAFKEFFGSHPLSQFLDQTNPLSEMVHKRRLSSVGPGGLTRRTASFQARDIHFSHYGRICPIETSEGMNAGLISSLAIQAGVNTSGSLGSPYLEMSDSSGEEQLVNLSPAEDDYYRVASENLLLSEWRGSEKEIIPVRYQQEFLSVLWEQVDFRSIHPLHHFSIGASLIPFIEHNDANRALMGSTMQRQAVPLIKPERCIVGTGLESQVALDSGSVAISEQDGKVCYIDGNRIELSLIHEAKKNKLAQPTTIEELKIFERSNNNTCMHQKPAVSLGELLRGGEIVADGAATVRGELALGKNILVAYMPWEGYNFEDAVLISERLIYEDIFTSLHIEKHEVEICATNQGPERVTKQISQLDGYLLRHLDDDGLVELGSWVEAGDVLVGKLTPQEGASSSRVPEGRLLQAIFGIQLVNARESCLRVPIGGRGRVIDVRWVYPEDDATNDLEVIHIYILQRRKIQVGDKIAGRHGNKGIVSKIVPRQDMPYLQNGTPVDMILSPLGVPSRMNVGQIFECLLGLAGEFLETHYRVVPFDERYEREASRKLVFAELHEAGARTNNPWLFEPSHPGKSRLIDGRTGDPFGQSITTGKAYIMKLIHQVDDKIHARSSGPYALVTQQPLKGKSRRGGQRIGEMEVWALEGFGVSYTLQEMLTTKSDHIQARYKALSAIMTGKPVCKPKTVPESFRLLVRELRCMGLNLERNFISEEDLGREFENI.

This sequence belongs to the RNA polymerase beta chain family. In plastids the minimal PEP RNA polymerase catalytic core is composed of four subunits: alpha, beta, beta', and beta''. When a (nuclear-encoded) sigma factor is associated with the core the holoenzyme is formed, which can initiate transcription.

It localises to the plastid. Its subcellular location is the chloroplast. The catalysed reaction is RNA(n) + a ribonucleoside 5'-triphosphate = RNA(n+1) + diphosphate. In terms of biological role, DNA-dependent RNA polymerase catalyzes the transcription of DNA into RNA using the four ribonucleoside triphosphates as substrates. The polypeptide is DNA-directed RNA polymerase subunit beta (Adiantum capillus-veneris (Maidenhair fern)).